Here is a 514-residue protein sequence, read N- to C-terminus: Beta-secretase 2 (514 aa).

The signal sequence occupies residues 1-20; the sequence is MGALLRALLLPLLAQWLLRA. A propeptide spanning residues 21–62 is cleaved from the precursor; that stretch reads VPVLAPAPFTLPLQVAGAANHRASTVPGLGTPELPRADGLAL. The Extracellular portion of the chain corresponds to 21-469; that stretch reads VPVLAPAPFT…NEPILWIVSY (449 aa). Residues 88 to 425 enclose the Peptidase A1 domain; it reads YYLEMLIGTP…DRAQRRVGFA (338 aa). D106 is a catalytic residue. The N-linked (GlcNAc...) asparagine glycan is linked to N166. Cystine bridges form between C229–C429, C288–C453, and C340–C389. The active site involves D299. A glycan (N-linked (GlcNAc...) asparagine) is linked at N362. Residues 470 to 490 traverse the membrane as a helical segment; sequence ALMSVCGAILLVLILLLLFPL. The Cytoplasmic portion of the chain corresponds to 491-514; that stretch reads HCRHAPRDPEVVNDESSLVRHRWK.

This sequence belongs to the peptidase A1 family. As to quaternary structure, monomer. Interacts with RTN3 and RTN4. Post-translationally, undergoes autoproteolytic cleavage. Glycosylated.

The protein localises to the cell membrane. It localises to the golgi apparatus. It is found in the endoplasmic reticulum. Its subcellular location is the endosome. The protein resides in the melanosome. The catalysed reaction is Broad endopeptidase specificity. Cleaves Glu-Val-Asn-Leu-|-Asp-Ala-Glu-Phe in the Swedish variant of Alzheimer's amyloid precursor protein.. Functionally, responsible for the proteolytic processing of the amyloid precursor protein (APP). Cleaves APP, between residues 690 and 691, leading to the generation and extracellular release of beta-cleaved soluble APP, and a corresponding cell-associated C-terminal fragment which is later released by gamma-secretase. It has also been shown that it can cleave APP between residues 671 and 672. Involved in the proteolytic shedding of PMEL at early stages of melanosome biogenesis. Cleaves PMEL within the M-beta fragment to release the amyloidogenic PMEL luminal fragment containing M-alpha and a small portion of M-beta N-terminus. This is a prerequisite step for subsequent processing and assembly of PMEL fibrils into amyloid sheets. Responsible also for the proteolytic processing of CLTRN in pancreatic beta cells. The sequence is that of Beta-secretase 2 (Bace2) from Rattus norvegicus (Rat).